Here is a 334-residue protein sequence, read N- to C-terminus: GTPase Obg (334 aa).

The 159-residue stretch at 1-159 (MRFVDEVVIK…KEVRLELNLL (159 aa)) folds into the Obg domain. Residues 160-331 (ADIALLGLPN…LAKKLNEFLH (172 aa)) enclose the OBG-type G domain. GTP-binding positions include 166-173 (GLPNAGKS), 191-195 (FTTMY), 212-215 (DIPG), 282-285 (NKID), and 312-314 (SAA). Mg(2+)-binding residues include Ser173 and Thr193.

The protein belongs to the TRAFAC class OBG-HflX-like GTPase superfamily. OBG GTPase family. As to quaternary structure, monomer. Requires Mg(2+) as cofactor.

Its subcellular location is the cytoplasm. In terms of biological role, an essential GTPase which binds GTP, GDP and possibly (p)ppGpp with moderate affinity, with high nucleotide exchange rates and a fairly low GTP hydrolysis rate. Plays a role in control of the cell cycle, stress response, ribosome biogenesis and in those bacteria that undergo differentiation, in morphogenesis control. In Francisella philomiragia subsp. philomiragia (strain ATCC 25017 / CCUG 19701 / FSC 153 / O#319-036), this protein is GTPase Obg.